A 274-amino-acid polypeptide reads, in one-letter code: Triosephosphate isomerase (274 aa).

31-33 (NWK) contributes to the substrate binding site. H118 acts as the Electrophile in catalysis. The Proton acceptor role is filled by E188. Residues G194, S234, and 255 to 256 (GG) each bind substrate.

The protein belongs to the triosephosphate isomerase family. In terms of assembly, homodimer.

The protein resides in the cytoplasm. The enzyme catalyses D-glyceraldehyde 3-phosphate = dihydroxyacetone phosphate. The protein operates within carbohydrate biosynthesis; gluconeogenesis. Its pathway is carbohydrate degradation; glycolysis; D-glyceraldehyde 3-phosphate from glycerone phosphate: step 1/1. Functionally, involved in the gluconeogenesis. Catalyzes stereospecifically the conversion of dihydroxyacetone phosphate (DHAP) to D-glyceraldehyde-3-phosphate (G3P). The chain is Triosephosphate isomerase from Chlamydia trachomatis serovar A (strain ATCC VR-571B / DSM 19440 / HAR-13).